Here is a 575-residue protein sequence, read N- to C-terminus: MRASKYLIATYKETPADAEVISHQLMLRAGLIRKLASGLYNWLPAGLRVLRKVETIVREEMDRAGAQEVLMPVVQPAELWEESGRWQQYGPELLRINDRHDRAFCLGPTHEEVITDLIRNELKSYKQLPANFYQIQTKFRDEVRPRFGVMRAREFLMKDAYSFHASQECLQETYDIMHAAYCKIFDRIGLDYRPVLADTGSIGGTGSHEFHVLADSGEDDIAFSTESNFAANVELAEALAPAKQTAEPLPREEVATPNVKTIEDVAKLLDVPTTQTVKTLIVKGVENEDGKHTLVALVLRGDHALNDIKAIKLAHVANPLEFADESGIKAAVGAEVGSLGPIGLSMPVYVDRAAAALVNFVCGANKDGYHYTNANWSDAAEHKVVDIRNVVIGDPSPCGKGTIDIKRGIEVGHIFQLGTKYSEAMKASVLDENGKDKTMIMGCYGIGVSRIVASAIEQNYDDNGIIWPDAIAPFHVAIVPINMQKSEAVAQKCEELYAQLNQLGYDVLLMDEPKARLGGMLADTELMGIPHRIVVGDRGLEKGQLEYKCRRDSDSQDIAVDDIIEFINNAVKTGK.

This sequence belongs to the class-II aminoacyl-tRNA synthetase family. ProS type 1 subfamily. Homodimer.

The protein resides in the cytoplasm. The catalysed reaction is tRNA(Pro) + L-proline + ATP = L-prolyl-tRNA(Pro) + AMP + diphosphate. Catalyzes the attachment of proline to tRNA(Pro) in a two-step reaction: proline is first activated by ATP to form Pro-AMP and then transferred to the acceptor end of tRNA(Pro). As ProRS can inadvertently accommodate and process non-cognate amino acids such as alanine and cysteine, to avoid such errors it has two additional distinct editing activities against alanine. One activity is designated as 'pretransfer' editing and involves the tRNA(Pro)-independent hydrolysis of activated Ala-AMP. The other activity is designated 'posttransfer' editing and involves deacylation of mischarged Ala-tRNA(Pro). The misacylated Cys-tRNA(Pro) is not edited by ProRS. The polypeptide is Proline--tRNA ligase (Saccharophagus degradans (strain 2-40 / ATCC 43961 / DSM 17024)).